The sequence spans 175 residues: MARVLKVAAASAAGLFPRLRTPVSTVRTSASLSSHPGAGPVWNLGRLNHVAVAVPDLEKARAFYKNVLGAEVGEPVPLPEHGVSVVFVNLGNTKMELLHPLGSDSPIAGFLKKNKAGGMHHVCIEVDNINVAVMDLKEKKIRILSEEAKIGAHGKPVIFLHPSDCGGVLVELEQA.

Residues 1 to 35 (MARVLKVAAASAAGLFPRLRTPVSTVRTSASLSSH) constitute a mitochondrion transit peptide. Residues 46–175 (RLNHVAVAVP…GGVLVELEQA (130 aa)) form the VOC domain. Histidine 49 is a binding site for Co(2+). N6-succinyllysine is present on lysine 113. A Co(2+)-binding site is contributed by histidine 121. Lysine 149 carries the post-translational modification N6-acetyllysine; alternate. Lysine 149 is modified (N6-succinyllysine; alternate). Residue glutamate 171 coordinates Co(2+).

It belongs to the methylmalonyl-CoA epimerase family.

Its subcellular location is the mitochondrion. It carries out the reaction (R)-methylmalonyl-CoA = (S)-methylmalonyl-CoA. Its function is as follows. Methylmalonyl-CoA epimerase involved in propionyl-CoA metabolism. This chain is Methylmalonyl-CoA epimerase, mitochondrial (MCEE), found in Bos taurus (Bovine).